A 340-amino-acid chain; its full sequence is Heat-inducible transcription repressor HrcA (340 aa).

The protein belongs to the HrcA family.

Negative regulator of class I heat shock genes (grpE-dnaK-dnaJ and groELS operons). Prevents heat-shock induction of these operons. The chain is Heat-inducible transcription repressor HrcA from Burkholderia ambifaria (strain MC40-6).